Consider the following 354-residue polypeptide: 3'-5' exonuclease (354 aa).

The disordered stretch occupies residues 1–120 (MEKYLIKMPI…PSPEKEKPEK (120 aa)). Composition is skewed to basic and acidic residues over residues 13–23 (KASEVPKDKAV), 36–50 (TKND…KENA), and 71–91 (KNLD…ENPP). A phosphoserine mark is found at Ser104, Ser110, and Ser112. Positions 146-314 (VLQWVEKQKD…GQVIYRELER (169 aa)) constitute a 3'-5' exonuclease domain. Mg(2+) contacts are provided by Asp163, Glu165, and Asp301.

This sequence belongs to the WRNexo family.

Its subcellular location is the nucleus. In terms of biological role, has exonuclease activity on both single-stranded and duplex templates bearing overhangs, but not blunt ended duplex DNA, and cleaves in a 3'-5' direction. Essential for the formation of DNA replication focal centers. Has an important role in maintaining genome stability. This is 3'-5' exonuclease from Drosophila erecta (Fruit fly).